Here is a 563-residue protein sequence, read N- to C-terminus: Coiled-coil domain-containing protein 38 (563 aa).

Residues 128-211 are a coiled coil; it reads TKKKTIKRFE…SIKSDIAKTE (84 aa). Positions 265 to 310 are disordered; that stretch reads DNSIDSDKMSVSEEWSSRRGSQGGRHGKHTLGQDSRKSSGFTRPES. A compositionally biased stretch (basic and acidic residues) spans 269–281; it reads DSDKMSVSEEWSS. 2 coiled-coil regions span residues 361–415 and 454–522; these read QDVD…RSRL and NAVQ…AVAQ. The disordered stretch occupies residues 543–563; that stretch reads QELLLVSDTRSKSQDEEYFFS.

As to quaternary structure, interacts with CCDC42, CFAP53, IFT88 and ODF2. Interacts with CCDC146. Interacts with TEKT3. Interacts with ubiquitinated histone H2A. In terms of tissue distribution, expressed exclusively in testis where it is detected mainly in spermatogonia and spermatocytes (at protein level).

Its subcellular location is the cytoplasm. The protein localises to the cytoskeleton. It is found in the microtubule organizing center. It localises to the centrosome. The protein resides in the perinuclear region. Its subcellular location is the cell projection. The protein localises to the cilium. It is found in the flagellum. Its function is as follows. Essential for male fertility. Required for sperm flagellum biogenesis. Also required for acrosome biogenesis. Required for the attachment of developing acrosomes to the nucleus during spermiogenesis and may be involved in the transport of fibrous sheath components. This is Coiled-coil domain-containing protein 38 (Ccdc38) from Mus musculus (Mouse).